The chain runs to 367 residues: Auxin efflux carrier component 8 (367 aa).

Topologically, residues 1-6 are extracellular; that stretch reads MISWLD. The chain crosses the membrane as a helical span at residues 7–27; it reads IYHVVSATVPLYVSMTLGFLS. The Cytoplasmic portion of the chain corresponds to 28-38; sequence ARHLKLFSPEQ. A helical transmembrane segment spans residues 39–59; the sequence is CAGINKFVAKFSIPLLSFQII. (indol-3-yl)acetate is bound at residue Ile-51. Topologically, residues 60–69 are extracellular; that stretch reads SENNPFKMSP. A helical transmembrane segment spans residues 70–90; the sequence is KLILSDILQKFLVVVVLAMVL. The Cytoplasmic segment spans residues 91–105; that stretch reads RFWHPTGGRGGKLGW. Residues 106 to 126 traverse the membrane as a helical segment; the sequence is VITGLSISVLPNTLILGMPIL. Residues Asn-117 and Leu-119 each contribute to the (indol-3-yl)acetate site. Residues 127 to 136 lie on the Extracellular side of the membrane; the sequence is SAIYGDEAAS. The helical transmembrane segment at 137–157 threads the bilayer; the sequence is ILEQIVVLQSLIWYTILLFLF. Residue Tyr-150 coordinates (indol-3-yl)acetate. The Cytoplasmic segment spans residues 158–227; that stretch reads ELNAARALPS…LIINPNTYAT (70 aa). The interval 168-194 is disordered; sequence SGASLEHTGNDQEEANIEDEPKEEEDE. Residues 178–194 are compositionally biased toward acidic residues; sequence DQEEANIEDEPKEEEDE. A helical transmembrane segment spans residues 228-248; that stretch reads LIGIIWATLHFRLGWNLPEMI. Residues 249 to 251 lie on the Extracellular side of the membrane; it reads DKS. Residues 252–272 form a helical membrane-spanning segment; the sequence is IHLLSDGGLGMAMFSLGLFMA. Topologically, residues 273–288 are cytoplasmic; it reads SQSSIIACGTKMAIIT. Residues 289–309 form a helical membrane-spanning segment; the sequence is MLLKFVLGPALMIASAYCIRL. The Extracellular portion of the chain corresponds to 310–312; that stretch reads KST. Residues 313–333 traverse the membrane as a helical segment; the sequence is LFKVAILQAALPQGVVPFVFA. Positions 327 and 328 each coordinate (indol-3-yl)acetate. Topologically, residues 334–344 are cytoplasmic; sequence KEYNLHPEIIS. Residues 345-365 traverse the membrane as a helical segment; the sequence is TGVIFGMLIALPTTLAYYFLL. Over 366–367 the chain is Extracellular; sequence DL.

Belongs to the auxin efflux carrier (TC 2.A.69.1) family. In terms of assembly, homodimer. In terms of tissue distribution, expressed in veins of mature leaves. Strongly expressed in pollen.

It is found in the endoplasmic reticulum membrane. The protein localises to the cell membrane. Auxin efflux carrier activity is competitively inhibited by naptalamate (N-1-naphthylphthalamic acid, NPA). Its function is as follows. Acts as a component of the auxin efflux carrier. Component of the intracellular auxin-transport pathway in the male gametophyte. Involved in the regulation of auxin homeostasis in pollen. Involved in the efflux of auxin from the endoplasmic reticulum into the cytoplasm. Binds auxins including indole-3-acetic acid (IAA), naphthaleneacetic acid (NAA) and the herbicide 2,4-dichlorophenoxyacetic acid (2,4-D), but barely indole-3-butyric acid (IBA) and 2-phenylacetic acid (PAA). PIN5 and PIN8 may have an antagonistic/compensatory activity. Involved in the control of vein patterning. Redundantly with PIN6, inhibits the vein-formation-promoting functions of PIN5. PIN5, PIN6, and PIN8 control vein network geometry, but they are expressed in mutually exclusive domains of leaf vascular cells. The chain is Auxin efflux carrier component 8 from Arabidopsis thaliana (Mouse-ear cress).